A 349-amino-acid chain; its full sequence is MDLIHTFLNLVAPPFTFFFLCLFLPPYWGLKFMVSILSWLLSENVAGKVVHITGASSGIGEYLAYEYAKRGACLALSARRETALHQVADTARHLGSPDVIVMRADVSKPEDCMRLIDQTVNHFGRLDHLVNNAAISIATLFEETPDISNLRPIMETNFWGSVYTTRYALQHLRKSRGKIVVMSSVDSWLPAPRRHIYSASKAALVSLYETLRVEVGSEIGITIVTPGYIESEITKGKFLSAQGEVDVDQDLRDVEVSAVPVGSVSGCAESIIKSTLRGDRCLTVPSWFRMTYLIKLLCPELLEWTFRLLYLTAPGTPTSDALSKKILDATGAKNLFYPPSIQSPDVKTD.

The helical; Signal-anchor for type II membrane protein transmembrane segment at 10–30 (LVAPPFTFFFLCLFLPPYWGL) threads the bilayer. Residues 13–26 (PPFTFFFLCLFLPP) carry the Proline-knob motif. NADP(+) contacts are provided by residues 54-80 (GASS…SARR), aspartate 105, and 132-135 (NAAI). Serine 184 contacts substrate. Catalysis depends on tyrosine 197, which acts as the Proton acceptor. NADP(+)-binding positions include 197 to 201 (YSASK) and lysine 201.

The protein belongs to the short-chain dehydrogenases/reductases (SDR) family. As to expression, expressed in seeds (at protein level).

It localises to the lipid droplet. The protein localises to the membrane. The enzyme catalyses an 11beta-hydroxysteroid + NADP(+) = an 11-oxosteroid + NADPH + H(+). Functionally, has dehydrogenase activity against 11 beta-hydroxysteroid and 17 beta-hydroxysteroid. May be involved in signal transduction regulated by various sterols. The sequence is that of 11-beta-hydroxysteroid dehydrogenase A from Arachis hypogaea (Peanut).